The following is an 840-amino-acid chain: SLIT and NTRK-like protein 6 (840 aa).

The signal sequence occupies residues 1-18 (MKLWTYLLYPSLLACLSL). The LRRNT 1 domain maps to 22-67 (SPMPSVRGSCDTLCNCEEKDGIMIINCEEKGINKLSQISVPPSRPF). Topologically, residues 23 to 609 (PMPSVRGSCD…LTDAVPLSVL (587 aa)) are extracellular. LRR repeat units lie at residues 89–110 (NALS…AFNG), 113–134 (LLKQ…TFHG), 137–158 (NLEF…AFSK), 161–182 (RLKV…IFRF), and 184–205 (PLTH…GFLE). The LRRCT 1 domain occupies 218–269 (NKWACNCELLQLKNWLENMPPQSIIGDVICYSPPPFKGSVLSRLKKESFCPT). The 42-residue stretch at 319–360 (PSTQLPVPYCPIPCNCKVLSPSGLLIHCQERNIESLSDLQPP) folds into the LRRNT 2 domain. LRR repeat units lie at residues 363–384 (NPRK…DLTD), 387–408 (TLEM…SFMN), 411–432 (RLQK…MFLG), 435–456 (SLEY…TFNP), 459–480 (KLKV…IFLG), and 482–503 (PLTR…NILD). In terms of domain architecture, LRRCT 2 spans 516–567 (NPWDCSCDLVGLQQWIHKLGKGTMTDDILCTSPGHLDKKELKALNSDLLCPG). The chain crosses the membrane as a helical span at residues 610 to 630 (ILGLLIVFITIVFCAAGIVVF). Residues 631–840 (VLHRRRRYKK…DYLEVLEQQT (210 aa)) lie on the Cytoplasmic side of the membrane. Over residues 717-726 (QRSLLERENH) the composition is skewed to basic and acidic residues. The segment at 717–736 (QRSLLERENHSPLTGSNMKY) is disordered. Residues 727–736 (SPLTGSNMKY) show a composition bias toward polar residues.

Belongs to the SLITRK family. As to expression, in the embryo, expressed in otic cyst, lateral trunk epidermis and underlying mesodermal tissue, limb bud, maxillary process, cochlea, retina, tongue, tooth primordium, central nervous system, and primordia of visceral organs including lung, gastrointestinal tract and pancreas. In the central nervous system, expressed primarily in dorsal thalamus, cerebellum and medulla.

The protein localises to the cell membrane. Its function is as follows. Regulator of neurite outgrowth required for normal hearing and vision. The protein is SLIT and NTRK-like protein 6 (Slitrk6) of Mus musculus (Mouse).